The chain runs to 280 residues: Small ribosomal subunit protein uS15m (280 aa).

It belongs to the universal ribosomal protein uS15 family. Component of the mitochondrial ribosome small subunit (28S) which comprises a 12S rRNA and about 30 distinct proteins. Expressed in anterior and posterior midgut primordia in stage 11 embryos. In stage 13 embryos, expression is high in the developing midgut and hindgut. In stage 16 embryos, expression is elevated in the midgut, hindgut, and in a small region that will give rise to pharyngeal muscles and to the stomatogastric nervous system. In larvae, expression is predominant in the gut, and head, presumably in pharyngeal muscles.

The protein localises to the mitochondrion. Functionally, essential for gut mitochondrial activity. Might be involved in tissue specific growth factor production. This Drosophila melanogaster (Fruit fly) protein is Small ribosomal subunit protein uS15m (bonsai).